We begin with the raw amino-acid sequence, 417 residues long: Gamma-glutamyl phosphate reductase (417 aa).

The protein belongs to the gamma-glutamyl phosphate reductase family.

The protein resides in the cytoplasm. It carries out the reaction L-glutamate 5-semialdehyde + phosphate + NADP(+) = L-glutamyl 5-phosphate + NADPH + H(+). Its pathway is amino-acid biosynthesis; L-proline biosynthesis; L-glutamate 5-semialdehyde from L-glutamate: step 2/2. Functionally, catalyzes the NADPH-dependent reduction of L-glutamate 5-phosphate into L-glutamate 5-semialdehyde and phosphate. The product spontaneously undergoes cyclization to form 1-pyrroline-5-carboxylate. The polypeptide is Gamma-glutamyl phosphate reductase (Bacteroides thetaiotaomicron (strain ATCC 29148 / DSM 2079 / JCM 5827 / CCUG 10774 / NCTC 10582 / VPI-5482 / E50)).